We begin with the raw amino-acid sequence, 360 residues long: Protein Wnt-2 (360 aa).

The first 25 residues, 1–25, serve as a signal peptide directing secretion; that stretch reads MNVPLGGIWLWLPLLLTWLTPEVSS. 11 disulfide bridges follow: Cys-76–Cys-87, Cys-127–Cys-135, Cys-137–Cys-157, Cys-206–Cys-220, Cys-208–Cys-215, Cys-278–Cys-309, Cys-294–Cys-304, Cys-308–Cys-348, Cys-324–Cys-339, Cys-326–Cys-336, and Cys-331–Cys-332. Residue Ser-212 is the site of O-palmitoleoyl serine; by PORCN attachment. N-linked (GlcNAc...) asparagine glycosylation is present at Asn-295.

The protein belongs to the Wnt family. In terms of processing, palmitoleoylation is required for efficient binding to frizzled receptors. Depalmitoleoylation leads to Wnt signaling pathway inhibition. In terms of tissue distribution, in embryos in the developing allantois, pericardium heart, and ventral-lateral mesoderm; in adults in lung, brain, heart and placenta.

The protein resides in the secreted. The protein localises to the extracellular space. Its subcellular location is the extracellular matrix. Functionally, ligand for members of the frizzled family of seven transmembrane receptors. Functions in the canonical Wnt/beta-catenin signaling pathway. Functions as a upstream regulator of FGF10 expression. Plays an important role in embryonic lung development. May contribute to embryonic brain development by regulating the proliferation of dopaminergic precursors and neurons. The polypeptide is Protein Wnt-2 (Wnt2) (Mus musculus (Mouse)).